Reading from the N-terminus, the 150-residue chain is 3-hydroxyacyl-[acyl-carrier-protein] dehydratase FabZ (150 aa).

The active site involves H52.

The protein belongs to the thioester dehydratase family. FabZ subfamily.

It localises to the cytoplasm. The catalysed reaction is a (3R)-hydroxyacyl-[ACP] = a (2E)-enoyl-[ACP] + H2O. Functionally, involved in unsaturated fatty acids biosynthesis. Catalyzes the dehydration of short chain beta-hydroxyacyl-ACPs and long chain saturated and unsaturated beta-hydroxyacyl-ACPs. The polypeptide is 3-hydroxyacyl-[acyl-carrier-protein] dehydratase FabZ (Albidiferax ferrireducens (strain ATCC BAA-621 / DSM 15236 / T118) (Rhodoferax ferrireducens)).